The primary structure comprises 273 residues: Vacuolar iron transporter (273 aa).

Over 1–47 (MGKQKIIDARKAYYEGDIEKSKEIHSHYHNLDKHAEHHSLDKDHLKT) the chain is Cytoplasmic. A helical membrane pass occupies residues 48 to 68 (IIFGSLDGIITIFAIVSGCVG). At 69-72 (ANIT) the chain is on the vacuolar side. Residues 73–93 (PAQVIIIGVGNLFANAISMGF) form a helical membrane-spanning segment. Residues 94–181 (SEYTSSTAQI…NEDKSEAFKK (88 aa)) lie on the Cytoplasmic side of the membrane. Residues glutamate 113, glutamate 116, glutamate 124, glutamate 127, methionine 161, and glutamate 165 each coordinate Fe cation. The chain crosses the membrane as a helical span at residues 182-202 (GILMFLSFCFFGMIPLFSYVL). At 203 to 212 (YNLFFSAENY) the chain is on the vacuolar side. Residues 213–233 (TSSFAVVFISTLITLFILGLF) traverse the membrane as a helical segment. At 234–246 (KSQFTTQKPIVCA) the chain is on the cytoplasmic side. A helical membrane pass occupies residues 247-267 (LSMVLNGSIAGMLPFLFGVLL). Residues 268 to 273 (KTNSGD) lie on the Vacuolar side of the membrane.

The protein belongs to the CCC1 family. In terms of assembly, monomer.

It localises to the vacuole membrane. It is found in the endoplasmic reticulum membrane. The catalysed reaction is Fe(2+)(in) = Fe(2+)(out). Functionally, vacuolar iron transporter involved in the transfer of iron ions from the cytosol to the vacuole for intracellular iron storage. Involved in detoxification of excess iron. The transport mechanism is not well defined and the role of protons is not clear. The chain is Vacuolar iron transporter from Plasmodium berghei (strain Anka).